We begin with the raw amino-acid sequence, 574 residues long: Glucose-6-phosphate 1-dehydrogenase, chloroplastic (574 aa).

NADP(+)-binding positions include 93–100 (GASGDLAK) and arginine 127. An intrachain disulfide couples cysteine 145 to cysteine 153. Lysine 230 serves as a coordination point for NADP(+). Residues lysine 230, 260–264 (HYLGK), glutamate 298, and aspartate 317 each bind D-glucose 6-phosphate. Histidine 322 acts as the Proton acceptor in catalysis. Lysine 415 provides a ligand contact to NADP(+). D-glucose 6-phosphate is bound by residues lysine 418 and lysine 423. The NADP(+) site is built by arginine 424, arginine 428, and arginine 457. Glutamine 459 provides a ligand contact to D-glucose 6-phosphate. NADP(+) is bound by residues 465–467 (YLK) and arginine 550.

It belongs to the glucose-6-phosphate dehydrogenase family. As to quaternary structure, homodimer.

It is found in the plastid. The protein resides in the chloroplast. The enzyme catalyses D-glucose 6-phosphate + NADP(+) = 6-phospho-D-glucono-1,5-lactone + NADPH + H(+). It functions in the pathway carbohydrate degradation; pentose phosphate pathway; D-ribulose 5-phosphate from D-glucose 6-phosphate (oxidative stage): step 1/3. With respect to regulation, regulated by metabolites. Post-translationally inactivated by cysteine-mediated redox modification via the ferredoxin-thioredoxin system in the light and this avoids futile cycles with photosynthetic CO2 fixation. Its function is as follows. Catalyzes the rate-limiting step of the oxidative pentose-phosphate pathway, which represents a route for the dissimilation of carbohydrates besides glycolysis. The main function of this enzyme is to provide reducing power (NADPH) and pentose phosphates for fatty acid and nucleic acid synthesis which are involved in membrane synthesis and cell division. The chain is Glucose-6-phosphate 1-dehydrogenase, chloroplastic (G6PD) from Spinacia oleracea (Spinach).